We begin with the raw amino-acid sequence, 650 residues long: Probable protein phosphatase 2C 36 (650 aa).

The disordered stretch occupies residues 146-166; the sequence is SGKKTKEKAKLKKSGSKSFTK. A compositionally biased stretch (basic residues) spans 148 to 166; it reads KKTKEKAKLKKSGSKSFTK. The 403-residue stretch at 239–641 folds into the PPM-type phosphatase domain; the sequence is ESALEEPKIQ…DDVSVIVISL (403 aa). Mn(2+) is bound by residues Asp-276, Gly-277, Asp-569, and Asp-632.

The protein belongs to the PP2C family. Mg(2+) is required as a cofactor. The cofactor is Mn(2+).

The protein localises to the nucleus. It catalyses the reaction O-phospho-L-seryl-[protein] + H2O = L-seryl-[protein] + phosphate. The catalysed reaction is O-phospho-L-threonyl-[protein] + H2O = L-threonyl-[protein] + phosphate. In Arabidopsis thaliana (Mouse-ear cress), this protein is Probable protein phosphatase 2C 36 (PLL3).